Consider the following 198-residue polypeptide: FMN-dependent NADH:quinone oxidoreductase (198 aa).

Residues serine 10, 16-18 (SQS), 94-97 (MYNF), and 138-141 (TRGG) contribute to the FMN site.

Belongs to the azoreductase type 1 family. As to quaternary structure, homodimer. It depends on FMN as a cofactor.

The catalysed reaction is 2 a quinone + NADH + H(+) = 2 a 1,4-benzosemiquinone + NAD(+). It catalyses the reaction N,N-dimethyl-1,4-phenylenediamine + anthranilate + 2 NAD(+) = 2-(4-dimethylaminophenyl)diazenylbenzoate + 2 NADH + 2 H(+). Its function is as follows. Quinone reductase that provides resistance to thiol-specific stress caused by electrophilic quinones. Also exhibits azoreductase activity. Catalyzes the reductive cleavage of the azo bond in aromatic azo compounds to the corresponding amines. The polypeptide is FMN-dependent NADH:quinone oxidoreductase (Shewanella baltica (strain OS185)).